Here is a 438-residue protein sequence, read N- to C-terminus: Methylenetetrahydrofolate--tRNA-(uracil-5-)-methyltransferase TrmFO (438 aa).

An FAD-binding site is contributed by 7–12 (GAGLAG).

The protein belongs to the MnmG family. TrmFO subfamily. It depends on FAD as a cofactor.

Its subcellular location is the cytoplasm. The enzyme catalyses uridine(54) in tRNA + (6R)-5,10-methylene-5,6,7,8-tetrahydrofolate + NADH + H(+) = 5-methyluridine(54) in tRNA + (6S)-5,6,7,8-tetrahydrofolate + NAD(+). It catalyses the reaction uridine(54) in tRNA + (6R)-5,10-methylene-5,6,7,8-tetrahydrofolate + NADPH + H(+) = 5-methyluridine(54) in tRNA + (6S)-5,6,7,8-tetrahydrofolate + NADP(+). Catalyzes the folate-dependent formation of 5-methyl-uridine at position 54 (M-5-U54) in all tRNAs. This chain is Methylenetetrahydrofolate--tRNA-(uracil-5-)-methyltransferase TrmFO, found in Sulfurihydrogenibium sp. (strain YO3AOP1).